Reading from the N-terminus, the 411-residue chain is Putative ion-transport protein YfeO (411 aa).

Helical transmembrane passes span 9–29 (MLLL…VLIA), 54–74 (DSPF…GLII), 99–119 (ALPG…SLGP), 149–169 (ILAS…AALI), 186–206 (LFAP…FFHP), 223–243 (IASG…AVWC), 258–278 (VLIL…GGPL), 296–316 (LGAG…VIAA), 322–342 (GGRI…LHAH), 343–363 (VEAV…VLVV), and 386–406 (LLCI…LLAA).

It belongs to the chloride channel (TC 2.A.49) family.

It localises to the cell membrane. The polypeptide is Putative ion-transport protein YfeO (Salmonella choleraesuis (strain SC-B67)).